Here is a 113-residue protein sequence, read N- to C-terminus: Cytochrome c55X (113 aa).

Residues 1 to 26 (MTVARHAVSRLGLALASFLLFPLALA) form the signal peptide. Cys-45, Cys-48, and His-49 together coordinate heme c.

Binds 1 heme c group covalently per subunit.

Its subcellular location is the periplasm. Monoheme c-type cytochrome. The polypeptide is Cytochrome c55X (nirC) (Stutzerimonas stutzeri (Pseudomonas stutzeri)).